The chain runs to 254 residues: MILSSDHHQNDLSSLLPKHVAIIMDGNGRWAKKRGKLRAFGHRAGIKAVRSAVSFSAKHNIESLTLYAFSSENWNRPEQEVSSLMELFIFALDSEIKSLHKHNIRLSVIGDIGRFSERLQDRIHRSVKLTANNTGLQLNIAANYGGRWDIVQSVQKIAQQIKDNSLEQQDITEELVNNYMNLSQQPQVDLVIRTGGEHRISNFLLWQIAYAEFYFTDILWPDFDENVFEGAINAFAKRERRFGGTIPDDADVGS.

Asp25 is an active-site residue. Mg(2+) is bound at residue Asp25. Residues 26 to 29 (GNGR), Trp30, Arg38, His42, and 70 to 72 (SSE) each bind substrate. The active-site Proton acceptor is Asn73. Residues Trp74, Arg76, and Arg193 each coordinate substrate. His198 contributes to the Mg(2+) binding site. 199–201 (RIS) is a substrate binding site. Glu212 is a Mg(2+) binding site.

It belongs to the UPP synthase family. As to quaternary structure, homodimer. The cofactor is Mg(2+).

It carries out the reaction 8 isopentenyl diphosphate + (2E,6E)-farnesyl diphosphate = di-trans,octa-cis-undecaprenyl diphosphate + 8 diphosphate. Its function is as follows. Catalyzes the sequential condensation of isopentenyl diphosphate (IPP) with (2E,6E)-farnesyl diphosphate (E,E-FPP) to yield (2Z,6Z,10Z,14Z,18Z,22Z,26Z,30Z,34E,38E)-undecaprenyl diphosphate (di-trans,octa-cis-UPP). UPP is the precursor of glycosyl carrier lipid in the biosynthesis of bacterial cell wall polysaccharide components such as peptidoglycan and lipopolysaccharide. The polypeptide is Ditrans,polycis-undecaprenyl-diphosphate synthase ((2E,6E)-farnesyl-diphosphate specific) (Photorhabdus laumondii subsp. laumondii (strain DSM 15139 / CIP 105565 / TT01) (Photorhabdus luminescens subsp. laumondii)).